The chain runs to 52 residues: Conotoxin Cal6.3b (52 aa).

Positions 1-4 are excised as a propeptide; that stretch reads KKKR. Cystine bridges form between C12–C23, C15–C27, and C22–C30. Residue Q50 is modified to Glutamine amide.

In terms of tissue distribution, expressed by the venom duct.

Its subcellular location is the secreted. Functionally, probable neurotoxin with unknown target. Possibly targets ion channels. The sequence is that of Conotoxin Cal6.3b from Californiconus californicus (California cone).